Consider the following 365-residue polypeptide: tRNA-specific 2-thiouridylase MnmA (365 aa).

ATP-binding positions include 14-21 (AMSGGVDS) and Leu40. Cys108 acts as the Nucleophile in catalysis. A disulfide bridge connects residues Cys108 and Cys204. Gly132 contacts ATP. Residues 154-156 (KDQ) form an interaction with tRNA region. Catalysis depends on Cys204, which acts as the Cysteine persulfide intermediate.

The protein belongs to the MnmA/TRMU family.

The protein resides in the cytoplasm. The catalysed reaction is S-sulfanyl-L-cysteinyl-[protein] + uridine(34) in tRNA + AH2 + ATP = 2-thiouridine(34) in tRNA + L-cysteinyl-[protein] + A + AMP + diphosphate + H(+). Its function is as follows. Catalyzes the 2-thiolation of uridine at the wobble position (U34) of tRNA, leading to the formation of s(2)U34. This chain is tRNA-specific 2-thiouridylase MnmA, found in Rickettsia massiliae (strain Mtu5).